The sequence spans 96 residues: uncharacterized protein (96 aa).

3 consecutive transmembrane segments (helical) span residues 2-22 (FIFN…ICYF), 38-58 (AGLK…TVML), and 68-88 (LTLA…QLIV).

Its subcellular location is the membrane. This is an uncharacterized protein from Schizosaccharomyces pombe (strain 972 / ATCC 24843) (Fission yeast).